Here is a 138-residue protein sequence, read N- to C-terminus: Large ribosomal subunit protein uL16c (138 aa).

The protein belongs to the universal ribosomal protein uL16 family. As to quaternary structure, part of the 50S ribosomal subunit.

The protein localises to the plastid. It localises to the chloroplast. The polypeptide is Large ribosomal subunit protein uL16c (Phaeodactylum tricornutum (strain CCAP 1055/1)).